The primary structure comprises 571 residues: PR domain zinc finger protein 14 (571 aa).

Position 79 is a phosphoserine (Ser-79). Positions 129-191 (LGHQIIGGDN…PKPSNQEGKS (63 aa)) are disordered. Residues 165–176 (RTSQLLPCSPSK) show a composition bias toward polar residues. Positions 194-384 (RFQFTEEDLH…DIPVSLQVTE (191 aa)) are interaction with CBFA2T2. In terms of domain architecture, SET spans 251-367 (EGLCLMQTVF…QNQELLVWYG (117 aa)). The C2H2-type 1; atypical zinc-finger motif lies at 400–424 (YRCERCGKVFTYKYYRDKHLKYTPC). C2H2-type zinc fingers lie at residues 432–455 (FPCS…LHVH), 461–483 (HKCS…MRVH), 489–511 (YQCV…IRQH), 517–540 (FKCK…RRSH), and 546–568 (CSCS…MKFH).

Belongs to the class V-like SAM-binding methyltransferase superfamily. As to quaternary structure, interacts with CBFA2T2. In terms of tissue distribution, expressed in embryonic stem cells. Tends to be overexpressed in breast cancer (at protein level).

The protein resides in the nucleus. In terms of biological role, transcription factor that has both positive and negative roles on transcription. Required for the maintenance of embryonic stem cell identity and the reacquisition of pluripotency in somatic cells. May play an essential role in germ cell development at 2 levels: the reacquisition of potential pluripotency, including SOX2 up-regulation, and successful epigenetic reprogramming, characterized by EHMT1 repression. Its association with CBFA2T2 is required for the functions in pluripotency and germ cell formation. Directly up-regulates the expression of pluripotency gene POU5F1 through its proximal enhancer. Binds to the DNA consensus sequence 5'-GGTC[TC]CTAA-3'. The sequence is that of PR domain zinc finger protein 14 (PRDM14) from Homo sapiens (Human).